The chain runs to 800 residues: Nucleolar complex protein 3 homolog (800 aa).

Basic residues-rich tracts occupy residues 1-19 (MGPASKRNKKKRPSFRKLL) and 42-53 (KKQRKEQRKLHK). Disordered stretches follow at residues 1-91 (MGPA…TDMM) and 167-197 (KPVLPQAEEEEEEPNQEVYLQKEEEPESAPL). A compositionally biased stretch (basic and acidic residues) spans 65–74 (PLERYKKRPE). Residues 449 to 490 (SFKEKRKNLSRMQRKWKKAEEKLQKELLEAEATESKEKKIKL) adopt a coiled-coil conformation. Residues 780–800 (LQEEPEQMSLDFTSPHTQQEP) are disordered. The segment covering 789 to 800 (LDFTSPHTQQEP) has biased composition (polar residues).

Belongs to the CBF/MAK21 family.

The protein localises to the nucleus. It localises to the nucleolus. The sequence is that of Nucleolar complex protein 3 homolog (noc3l) from Danio rerio (Zebrafish).